Reading from the N-terminus, the 301-residue chain is D-alanine--D-alanine ligase (301 aa).

Residues 102–295 (KAVFAAAGLP…FPALCAWMVE (194 aa)) enclose the ATP-grasp domain. Residue 128–181 (PLPRPYVIKPVNEGSSVGVFILREGDNRRADIARAWRHGSVAMTEEYVPGRELT) coordinates ATP. The Mg(2+) site is built by Asp-248, Glu-262, and Asn-264.

Belongs to the D-alanine--D-alanine ligase family. Mg(2+) serves as cofactor. Mn(2+) is required as a cofactor.

It localises to the cytoplasm. The catalysed reaction is 2 D-alanine + ATP = D-alanyl-D-alanine + ADP + phosphate + H(+). The protein operates within cell wall biogenesis; peptidoglycan biosynthesis. Its function is as follows. Cell wall formation. This Acidiphilium cryptum (strain JF-5) protein is D-alanine--D-alanine ligase.